A 535-amino-acid polypeptide reads, in one-letter code: Cytochrome P450 monooxygenase BOA7 (535 aa).

The helical transmembrane segment at serine 20–tryptophan 37 threads the bilayer. 4 N-linked (GlcNAc...) asparagine glycosylation sites follow: asparagine 65, asparagine 148, asparagine 180, and asparagine 420. Cysteine 478 provides a ligand contact to heme.

This sequence belongs to the cytochrome P450 family. Heme is required as a cofactor.

It localises to the membrane. Its pathway is polyketide biosynthesis. In terms of biological role, cytochrome P450 monooxygenase; part of the gene cluster B that mediates the biosynthesis of botcinic acid and its botcinin derivatives, acetate-derived polyketides that contribute to virulence when combined with the sesquiterpene botrydial. Botcinic acid and its derivatives have been shown to induce chlorosis and necrosis during host plant infection, but also have antifungal activities. Two polyketide synthases, BOA6 and BOA9, are involved in the biosynthesis of botcinins. BOA6 mediates the formation of the per-methylated tetraketide core by condensation of four units of malonyl-CoA with one unit of acetyl-CoA, which would be methylated in activated methylene groups to yield a bicyclic acid intermediate that could then either be converted to botrylactone derivatives or lose the starter acetate unit through a retro-Claisen type C-C bond cleavage to yield botcinin derivatives. The second polyketide synthase, BOA9, is probably required for the biosynthesis of the tetraketide side chain of botcinins. The methyltransferase (MT) domain within BOA6 is probably responsible for the incorporation of four methyl groups. The trans-enoyl reductase BOA5 might take over the enoyl reductase function of BOA6 that misses an ER domain. The monooxygenases BOA2, BOA3 and BOA4 might be involved in further hydroxylations at C4, C5 and C8, whereas BOA7, close to BOA9, could potentially be involved in the hydroxylation at C4 in the side chain of botcinins. This Botryotinia fuckeliana (strain B05.10) (Noble rot fungus) protein is Cytochrome P450 monooxygenase BOA7.